A 521-amino-acid polypeptide reads, in one-letter code: Protein DML1 (521 aa).

The protein belongs to the misato family.

It localises to the mitochondrion. Functionally, involved in the partitioning of the mitochondrial organelle and mitochondrial DNA (mtDNA) inheritance. The protein is Protein DML1 (DML1) of Phaeosphaeria nodorum (strain SN15 / ATCC MYA-4574 / FGSC 10173) (Glume blotch fungus).